The following is a 446-amino-acid chain: Probable glycine dehydrogenase (decarboxylating) subunit 1 (446 aa).

This sequence belongs to the GcvP family. N-terminal subunit subfamily. In terms of assembly, the glycine cleavage system is composed of four proteins: P, T, L and H. In this organism, the P 'protein' is a heterodimer of two subunits.

It catalyses the reaction N(6)-[(R)-lipoyl]-L-lysyl-[glycine-cleavage complex H protein] + glycine + H(+) = N(6)-[(R)-S(8)-aminomethyldihydrolipoyl]-L-lysyl-[glycine-cleavage complex H protein] + CO2. Functionally, the glycine cleavage system catalyzes the degradation of glycine. The P protein binds the alpha-amino group of glycine through its pyridoxal phosphate cofactor; CO(2) is released and the remaining methylamine moiety is then transferred to the lipoamide cofactor of the H protein. In Methylocella silvestris (strain DSM 15510 / CIP 108128 / LMG 27833 / NCIMB 13906 / BL2), this protein is Probable glycine dehydrogenase (decarboxylating) subunit 1.